The following is a 333-amino-acid chain: Adenosine deaminase (333 aa).

Residues His-12 and His-14 each coordinate Zn(2+). His-14, Asp-16, and Gly-170 together coordinate substrate. Zn(2+) is bound at residue His-197. The Proton donor role is filled by Glu-200. Position 278 (Asp-278) interacts with Zn(2+). Asp-279 serves as a coordination point for substrate.

This sequence belongs to the metallo-dependent hydrolases superfamily. Adenosine and AMP deaminases family. Adenosine deaminase subfamily. Zn(2+) serves as cofactor.

The enzyme catalyses adenosine + H2O + H(+) = inosine + NH4(+). The catalysed reaction is 2'-deoxyadenosine + H2O + H(+) = 2'-deoxyinosine + NH4(+). In terms of biological role, catalyzes the hydrolytic deamination of adenosine and 2-deoxyadenosine. In Escherichia coli O157:H7, this protein is Adenosine deaminase.